The primary structure comprises 122 residues: UPF0102 protein DIP1513 (122 aa).

The protein belongs to the UPF0102 family.

In Corynebacterium diphtheriae (strain ATCC 700971 / NCTC 13129 / Biotype gravis), this protein is UPF0102 protein DIP1513.